The following is a 430-amino-acid chain: Histone acetyltransferase type B subunit 2 (430 aa).

WD repeat units follow at residues 129-169 (PHDG…ALTT), 180-220 (GHTA…FTSS), 233-273 (RHTD…EEEA), 279-319 (AHSK…QRLH), and 323-363 (GHED…EEQT). The interaction with the histone H4 N-terminus stretch occupies residues 365–369 (EDAED). One copy of the WD 6 repeat lies at 380–420 (GHTNRISEFSWCPNERWVVGSLADDNILQIWSPSRVIWGRD). Position 425 is a phosphoserine (serine 425).

It belongs to the WD repeat RBAP46/RBAP48/MSI1 family. As to quaternary structure, component of the HAT-B complex composed of at least hat1 and hat2. The HAT-B complex binds to histone H4 tail. Component of the CENP-A recruiting complex composed of at least mis16, mis19, mis19 and mis20.

Its subcellular location is the cytoplasm. The protein localises to the nucleus. It is found in the chromosome. The protein resides in the centromere. It localises to the kinetochore. Functionally, regulatory subunit of the histone acetylase B (HAT-B) complex. The complex acetylates 'Lys-12' of histone H4 which is required for telomeric silencing. Component of the CENP-A recruiting complex that ensures the integrity of mitotic spindles through maintenance of kinetochore factors mis6/CENP-I and cnp1/CENP-A. Maintains the deacetylated state of histones specifically in the central core of the centromeres. In Schizosaccharomyces pombe (strain 972 / ATCC 24843) (Fission yeast), this protein is Histone acetyltransferase type B subunit 2 (mis16).